Here is a 563-residue protein sequence, read N- to C-terminus: Dihydroxy-acid dehydratase (563 aa).

Aspartate 78 serves as a coordination point for Mg(2+). A [2Fe-2S] cluster-binding site is contributed by cysteine 119. Aspartate 120 and lysine 121 together coordinate Mg(2+). N6-carboxylysine is present on lysine 121. Residue cysteine 191 participates in [2Fe-2S] cluster binding. Glutamate 442 is a binding site for Mg(2+). The active-site Proton acceptor is the serine 468.

Belongs to the IlvD/Edd family. In terms of assembly, homodimer. [2Fe-2S] cluster serves as cofactor. The cofactor is Mg(2+).

The catalysed reaction is (2R)-2,3-dihydroxy-3-methylbutanoate = 3-methyl-2-oxobutanoate + H2O. It carries out the reaction (2R,3R)-2,3-dihydroxy-3-methylpentanoate = (S)-3-methyl-2-oxopentanoate + H2O. It participates in amino-acid biosynthesis; L-isoleucine biosynthesis; L-isoleucine from 2-oxobutanoate: step 3/4. It functions in the pathway amino-acid biosynthesis; L-valine biosynthesis; L-valine from pyruvate: step 3/4. Functionally, functions in the biosynthesis of branched-chain amino acids. Catalyzes the dehydration of (2R,3R)-2,3-dihydroxy-3-methylpentanoate (2,3-dihydroxy-3-methylvalerate) into 2-oxo-3-methylpentanoate (2-oxo-3-methylvalerate) and of (2R)-2,3-dihydroxy-3-methylbutanoate (2,3-dihydroxyisovalerate) into 2-oxo-3-methylbutanoate (2-oxoisovalerate), the penultimate precursor to L-isoleucine and L-valine, respectively. This is Dihydroxy-acid dehydratase from Desulfitobacterium hafniense (strain DSM 10664 / DCB-2).